We begin with the raw amino-acid sequence, 84 residues long: Delta-stichotoxin-Shd3a (84 aa).

The first 19 residues, 1 to 19 (MAYLKIVLVALMLVLGVSA), serve as a signal peptide directing secretion. Residues 20–33 (MRLSDQEDQDVSVV) constitute a propeptide that is removed on maturation. Disulfide bonds link cysteine 38/cysteine 78, cysteine 40/cysteine 68, and cysteine 61/cysteine 79. Position 83 is a lysine amide (lysine 83).

The protein belongs to the sea anemone sodium channel inhibitory toxin family. Type II subfamily.

It is found in the secreted. Its subcellular location is the nematocyst. Binds specifically to voltage-gated sodium channels (Nav), thereby delaying their inactivation during signal transduction. This Stichodactyla haddoni (Saddle carpet anemone) protein is Delta-stichotoxin-Shd3a.